A 953-amino-acid polypeptide reads, in one-letter code: Coatomer subunit beta (953 aa).

Thr-2 carries the N-acetylthreonine modification. HEAT repeat units lie at residues 96-131, 132-168, 240-276, 277-314, 316-353, and 396-433; these read HEMILVCDAYRKDLQHPNEFIRGSTLRFLCKLKEAE, LLEPLMPAIRACLEHRHSYVRRNAVLAIYTIYRNFEH, SERARFIRCIYNLLQSSSPAVKYEAAGTLVTLSSAPT, AIKAAAQCYIDLIIKESDNNVKLIVLDRLIELKEHPAH, RVLQDLVMDILRVLSTPDLEVRKKTLQLALDLVSSRNV, and DMAANVIPVLMEFLSDSNEAAAADVLEFVREAIQRFDN. Lys-494 carries the post-translational modification N6-acetyllysine.

As to quaternary structure, oligomeric complex that consists of at least the alpha, beta, beta', gamma, delta, epsilon and zeta subunits. Interacts with CAPN8 and PRKCE. Interacts with SCYL1. Interacts with COPG1. Interacts with ARF1 (myristoylated); this interaction is required for binding of COPB1 to Golgi membranes. Interacts (via trunk domain) with ARF1 (via switch I region); the interaction is direct. Interacts with KCNK2 (via N-terminus); this interaction increases the channel-mediated whole cell currents and promotes plasma membrane expression of KCNK2. Interacts with STX17. Interacts with TMEM115. Interacts with TMEM41B. As to expression, high expression in the lung, kidney, skeletal muscle and small intestine, and lower level of expression in heart, liver, spleen, stomach and fat.

It localises to the cytoplasm. The protein localises to the golgi apparatus membrane. It is found in the cytoplasmic vesicle. The protein resides in the COPI-coated vesicle membrane. Its subcellular location is the cell membrane. It localises to the endoplasmic reticulum-Golgi intermediate compartment. Its function is as follows. The coatomer is a cytosolic protein complex that binds to dilysine motifs and reversibly associates with Golgi non-clathrin-coated vesicles, which further mediate biosynthetic protein transport from the ER, via the Golgi up to the trans Golgi network. Coatomer complex is required for budding from Golgi membranes, and is essential for the retrograde Golgi-to-ER transport of dilysine-tagged proteins. In mammals, the coatomer can only be recruited by membranes associated to ADP-ribosylation factors (ARFs), which are small GTP-binding proteins; the complex also influences the Golgi structural integrity, as well as the processing, activity, and endocytic recycling of LDL receptors. Plays a functional role in facilitating the transport of kappa-type opioid receptor mRNAs into axons and enhances translation of these proteins. Required for limiting lipid storage in lipid droplets. Involved in lipid homeostasis by regulating the presence of perilipin family members PLIN2 and PLIN3 at the lipid droplet surface and promoting the association of adipocyte surface triglyceride lipase (PNPLA2) with the lipid droplet to mediate lipolysis. Involved in the Golgi disassembly and reassembly processes during cell cycle. Involved in autophagy by playing a role in early endosome function. Plays a role in organellar compartmentalization of secretory compartments including endoplasmic reticulum (ER)-Golgi intermediate compartment (ERGIC), Golgi, trans-Golgi network (TGN) and recycling endosomes, and in biosynthetic transport of CAV1. The sequence is that of Coatomer subunit beta from Sus scrofa (Pig).